A 178-amino-acid polypeptide reads, in one-letter code: MDSQGPIILEKSIKIEEVIKIAITSIIDIVTKTVTPEIKAPYELVDVEYDKMGSDYILSILVDKEGGITVEDTSDLTNIISPLLDTIDPDPFPNQYMLEVSSPGLERPLKTADSLKAAVGSYINVSLYQAIDKVKVFQGDLLAFDGETLTIDYLDKTRHKIVNIPYQAVAKVRMAVKL.

Belongs to the RimP family.

The protein resides in the cytoplasm. In terms of biological role, required for maturation of 30S ribosomal subunits. This Streptococcus pyogenes serotype M4 (strain MGAS10750) protein is Ribosome maturation factor RimP.